A 126-amino-acid chain; its full sequence is Integrin alpha-M (126 aa).

N-linked (GlcNAc...) asparagine glycans are attached at residues N25, N78, and N106.

Belongs to the integrin alpha chain family. In terms of assembly, heterodimer of an alpha and a beta chain. ITGAM associates with ITGB2. Found in a complex with CD177 and ITGB2/CD18. Interacts with JAM3. Interacts with THBD. Interacts with TMEM268; this interaction inhibits ITGAM degradation via the endosome-lysosome pathway.

It localises to the cell membrane. Its subcellular location is the membrane raft. Its function is as follows. Integrin ITGAM/ITGB2 is implicated in various adhesive interactions of monocytes, macrophages and granulocytes as well as in mediating the uptake of complement-coated particles. It is identical with CR-3, the receptor for the iC3b fragment of the third complement component. It probably recognizes the R-G-D peptide in C3b. Integrin ITGAM/ITGB2 is also a receptor for fibrinogen, factor X and ICAM1. It recognizes P1 and P2 peptides of fibrinogen gamma chain. Regulates neutrophil migration. In association with beta subunit ITGB2/CD18, required for CD177-PRTN3-mediated activation of TNF primed neutrophils. May regulate phagocytosis-induced apoptosis in extravasated neutrophils. May play a role in mast cell development. Required with TYROBP/DAP12 in microglia to control production of microglial superoxide ions which promote the neuronal apoptosis that occurs during brain development. The chain is Integrin alpha-M (ITGAM) from Cavia porcellus (Guinea pig).